An 80-amino-acid polypeptide reads, in one-letter code: UPF0291 protein LCA_1274 (80 aa).

Residues 59 to 80 (EGKEVTPEKVKDIQREKGLRDD) are disordered.

This sequence belongs to the UPF0291 family.

The protein resides in the cytoplasm. The sequence is that of UPF0291 protein LCA_1274 from Latilactobacillus sakei subsp. sakei (strain 23K) (Lactobacillus sakei subsp. sakei).